The primary structure comprises 109 residues: Large ribosomal subunit protein uL24 (109 aa).

The protein belongs to the universal ribosomal protein uL24 family. As to quaternary structure, part of the 50S ribosomal subunit.

One of two assembly initiator proteins, it binds directly to the 5'-end of the 23S rRNA, where it nucleates assembly of the 50S subunit. Functionally, one of the proteins that surrounds the polypeptide exit tunnel on the outside of the subunit. The polypeptide is Large ribosomal subunit protein uL24 (Rickettsia rickettsii (strain Iowa)).